Reading from the N-terminus, the 652-residue chain is DNA ligase (652 aa).

NAD(+) contacts are provided by residues 30–34 (DEVYD), 79–80 (SL), and Glu108. Lys110 serves as the catalytic N6-AMP-lysine intermediate. Positions 131, 165, 280, and 304 each coordinate NAD(+). Zn(2+) is bound by residues Cys398, Cys401, Cys414, and Cys419. Residues 574 to 652 (AKENPFKGKS…DEMRSKIEQA (79 aa)) enclose the BRCT domain.

It belongs to the NAD-dependent DNA ligase family. LigA subfamily. The cofactor is Mg(2+). Requires Mn(2+) as cofactor.

The catalysed reaction is NAD(+) + (deoxyribonucleotide)n-3'-hydroxyl + 5'-phospho-(deoxyribonucleotide)m = (deoxyribonucleotide)n+m + AMP + beta-nicotinamide D-nucleotide.. Functionally, DNA ligase that catalyzes the formation of phosphodiester linkages between 5'-phosphoryl and 3'-hydroxyl groups in double-stranded DNA using NAD as a coenzyme and as the energy source for the reaction. It is essential for DNA replication and repair of damaged DNA. The chain is DNA ligase from Sulfurimonas denitrificans (strain ATCC 33889 / DSM 1251) (Thiomicrospira denitrificans (strain ATCC 33889 / DSM 1251)).